The chain runs to 29 residues: Glucagon (29 aa).

It belongs to the glucagon family.

Its subcellular location is the secreted. Functionally, promotes hydrolysis of glycogen and lipids, and raises the blood sugar level. The sequence is that of Glucagon (gcg) from Torpedo marmorata (Marbled electric ray).